Consider the following 131-residue polypeptide: Aspartate 1-decarboxylase (131 aa).

Catalysis depends on Ser-25, which acts as the Schiff-base intermediate with substrate; via pyruvic acid. Ser-25 carries the pyruvic acid (Ser) modification. Thr-57 contacts substrate. Catalysis depends on Tyr-58, which acts as the Proton donor. 73–75 (GAA) lines the substrate pocket.

This sequence belongs to the PanD family. In terms of assembly, heterooctamer of four alpha and four beta subunits. Pyruvate serves as cofactor. Is synthesized initially as an inactive proenzyme, which is activated by self-cleavage at a specific serine bond to produce a beta-subunit with a hydroxyl group at its C-terminus and an alpha-subunit with a pyruvoyl group at its N-terminus.

The protein resides in the cytoplasm. The enzyme catalyses L-aspartate + H(+) = beta-alanine + CO2. It functions in the pathway cofactor biosynthesis; (R)-pantothenate biosynthesis; beta-alanine from L-aspartate: step 1/1. In terms of biological role, catalyzes the pyruvoyl-dependent decarboxylation of aspartate to produce beta-alanine. The protein is Aspartate 1-decarboxylase of Acaryochloris marina (strain MBIC 11017).